Here is a 547-residue protein sequence, read N- to C-terminus: Chaperonin GroEL 1 (547 aa).

Residues 30-33, K51, 87-91, G415, and D496 each bind ATP; these read TLGP and DGTTT.

The protein belongs to the chaperonin (HSP60) family. As to quaternary structure, forms a cylinder of 14 subunits composed of two heptameric rings stacked back-to-back. Interacts with the co-chaperonin GroES.

Its subcellular location is the cytoplasm. It catalyses the reaction ATP + H2O + a folded polypeptide = ADP + phosphate + an unfolded polypeptide.. Functionally, together with its co-chaperonin GroES, plays an essential role in assisting protein folding. The GroEL-GroES system forms a nano-cage that allows encapsulation of the non-native substrate proteins and provides a physical environment optimized to promote and accelerate protein folding. The chain is Chaperonin GroEL 1 from Rhodopseudomonas palustris (strain BisB18).